A 774-amino-acid chain; its full sequence is Beta-xylosidase/alpha-L-arabinofuranosidase 2 (774 aa).

The signal sequence occupies residues 1–33 (MASVENRTPNVSVFLCFFVLFATLLLSGGRVSS). A glycan (N-linked (GlcNAc...) asparagine) is linked at Asn-136. The active site involves Asp-303. Asn-437 is a glycosylation site (N-linked (GlcNAc...) asparagine).

This sequence belongs to the glycoside hydrolase 3 family.

It localises to the secreted. Its subcellular location is the extracellular space. The protein resides in the extracellular matrix. The catalysed reaction is Hydrolysis of (1-&gt;4)-beta-D-xylans, to remove successive D-xylose residues from the non-reducing termini.. It carries out the reaction Hydrolysis of terminal non-reducing alpha-L-arabinofuranoside residues in alpha-L-arabinosides.. Its function is as follows. A bifunctional beta-xylosidase/alpha-L-arabinosidase, exo-enzyme that acts synergistically with endohydrolases. Releases xylose and arabinose from cell walls. The polypeptide is Beta-xylosidase/alpha-L-arabinofuranosidase 2 (Medicago sativa subsp. varia (Alfalfa)).